A 396-amino-acid polypeptide reads, in one-letter code: Probable sugar efflux transporter (396 aa).

The next 12 membrane-spanning stretches (helical) occupy residues 15 to 35, 50 to 70, 81 to 101, 103 to 123, 136 to 156, 169 to 189, 209 to 229, 246 to 266, 275 to 295, 301 to 321, 333 to 353, and 364 to 384; these read VVTL…PVGL, VGIM…PFML, LICL…AWNF, VLVI…SITA, AQAL…GLPI, TFFA…KLLP, PALM…YTAY, FATV…LVFG, SLVS…LPAA, LAIL…GMQV, VAMA…ALVG, and AIGY…VLIF.

This sequence belongs to the major facilitator superfamily. SotB (TC 2.A.1.2) family.

The protein localises to the cell inner membrane. In terms of biological role, involved in the efflux of sugars. The physiological role may be the reduction of the intracellular concentration of toxic sugars or sugar metabolites. This is Probable sugar efflux transporter from Salmonella schwarzengrund (strain CVM19633).